The primary structure comprises 397 residues: Na(+)/H(+) antiporter NhaA 1 (397 aa).

Helical transmembrane passes span 15–35 (FQLE…ALII), 42–62 (YLYG…LNIA), 65–85 (LLLW…GLEV), 101–121 (ILPA…YWFI), 129–149 (VAGW…VLAL), 160–180 (LFLM…IALF), 183–203 (GTLS…LVAM), 219–241 (LILW…ALAF), 265–285 (WVAY…SLAG), 299–319 (ITIG…WVAV), 335–355 (ILGV…VGSL), and 370–390 (MGIL…TAMA).

This sequence belongs to the NhaA Na(+)/H(+) (TC 2.A.33) antiporter family.

Its subcellular location is the cell inner membrane. The catalysed reaction is Na(+)(in) + 2 H(+)(out) = Na(+)(out) + 2 H(+)(in). Na(+)/H(+) antiporter that extrudes sodium in exchange for external protons. The sequence is that of Na(+)/H(+) antiporter NhaA 1 from Pseudomonas putida (strain ATCC 47054 / DSM 6125 / CFBP 8728 / NCIMB 11950 / KT2440).